We begin with the raw amino-acid sequence, 427 residues long: Adenylosuccinate synthetase (427 aa).

GTP is bound by residues 12–18 (GDEGKGK) and 40–42 (GHT). D13 (proton acceptor) is an active-site residue. D13 and G40 together coordinate Mg(2+). IMP contacts are provided by residues 13–16 (DEGK), 38–41 (NAGH), T128, R142, Q223, T238, and R302. H41 functions as the Proton donor in the catalytic mechanism. 298-304 (TTTGRPR) contributes to the substrate binding site. Residues R304, 330-332 (LLD), and 412-414 (SVG) contribute to the GTP site.

It belongs to the adenylosuccinate synthetase family. Homodimer. It depends on Mg(2+) as a cofactor.

Its subcellular location is the cytoplasm. It carries out the reaction IMP + L-aspartate + GTP = N(6)-(1,2-dicarboxyethyl)-AMP + GDP + phosphate + 2 H(+). Its pathway is purine metabolism; AMP biosynthesis via de novo pathway; AMP from IMP: step 1/2. Its function is as follows. Plays an important role in the de novo pathway of purine nucleotide biosynthesis. Catalyzes the first committed step in the biosynthesis of AMP from IMP. In Alkaliphilus metalliredigens (strain QYMF), this protein is Adenylosuccinate synthetase.